The primary structure comprises 138 residues: Centromere protein S (138 aa).

Met-1 is subject to N-acetylmethionine. The tract at residues 112–138 is disordered; it reads AKKKKKLEDENRNSVESAEAGVEESEN.

Belongs to the TAF9 family. CENP-S/MHF1 subfamily. Heterodimer with CENPX, sometimes called MHF; this interaction stabilizes both partners. MHF heterodimers can assemble to form tetrameric structures. MHF also coassemble with CENPT-CENPW heterodimers at centromeres to form the tetrameric CENP-T-W-S-X complex. Forms a discrete complex with FANCM and CENPX, called FANCM-MHF; this interaction, probably mediated by direct binding between CENPS and FANCM, leads to synergistic activation of double-stranded DNA binding and strongly stimulates FANCM-mediated DNA remodeling. Recruited by FANCM to the Fanconi anemia (FA) core complex, which consists of CENPS, CENPX, FANCA, FANCB, FANCC, FANCE, FANCF, FANCG, FANCL, FANCM, FAAP24 and FAAP100. The FA core complex associates with Bloom syndrome (BLM) complex, which consists of at least BLM, DNA topoisomerase 3-alpha (TOP3A), RMI1/BLAP75, RPA1/RPA70 and RPA2/RPA32. The super complex between FA and BLM is called BRAFT. Component of the CENPA-CAD complex, composed of CENPI, CENPK, CENPL, CENPO, CENPP, CENPQ, CENPR and CENPS. The CENPA-CAD complex is probably recruited on centromeres by the CENPA-NAC complex, at least composed of CENPA, CENPC, CENPH, CENPM, CENPN, CENPT and CENPU.

Its subcellular location is the nucleus. The protein resides in the chromosome. It localises to the centromere. It is found in the kinetochore. Functionally, DNA-binding component of the Fanconi anemia (FA) core complex. Required for the normal activation of the FA pathway, leading to monoubiquitination of the FANCI-FANCD2 complex in response to DNA damage, cellular resistance to DNA cross-linking drugs, and prevention of chromosomal breakage. In complex with CENPX (MHF heterodimer), crucial cofactor for FANCM in both binding and ATP-dependent remodeling of DNA. Stabilizes FANCM. In complex with CENPX and FANCM (but not other FANC proteins), rapidly recruited to blocked forks and promotes gene conversion at blocked replication forks. In complex with CENPT, CENPW and CENPX (CENP-T-W-S-X heterotetramer), involved in the formation of a functional kinetochore outer plate, which is essential for kinetochore-microtubule attachment and faithful mitotic progression. As a component of MHF and CENP-T-W-S-X complexes, binds DNA and bends it to form a nucleosome-like structure. DNA-binding function is fulfilled in the presence of CENPX, with the following preference for DNA substates: Holliday junction &gt; double-stranded &gt; splay arm &gt; single-stranded. Does not bind DNA on its own. This Bos taurus (Bovine) protein is Centromere protein S (CENPS).